A 506-amino-acid polypeptide reads, in one-letter code: Ribose import ATP-binding protein RbsA 2 (506 aa).

2 consecutive ABC transporter domains span residues 6-241 and 254-499; these read LSMT…VGRV and EKSN…SITI. Position 38-45 (38-45) interacts with ATP; the sequence is GENGAGKS.

This sequence belongs to the ABC transporter superfamily. Ribose importer (TC 3.A.1.2.1) family. The complex is composed of an ATP-binding protein (RbsA), two transmembrane proteins (RbsC) and a solute-binding protein (RbsB).

The protein localises to the cell inner membrane. The enzyme catalyses D-ribose(out) + ATP + H2O = D-ribose(in) + ADP + phosphate + H(+). In terms of biological role, part of the ABC transporter complex RbsABC involved in ribose import. Responsible for energy coupling to the transport system. This chain is Ribose import ATP-binding protein RbsA 2, found in Agrobacterium fabrum (strain C58 / ATCC 33970) (Agrobacterium tumefaciens (strain C58)).